Consider the following 542-residue polypeptide: DM7 family protein CG15333 (542 aa).

This sequence belongs to the DM7 family.

This chain is DM7 family protein CG15333, found in Drosophila melanogaster (Fruit fly).